We begin with the raw amino-acid sequence, 719 residues long: Acyl-coenzyme A oxidase (719 aa).

The Microbody targeting signal signature appears at 716-719 (APKI).

The protein belongs to the acyl-CoA oxidase family. It depends on FAD as a cofactor.

The protein localises to the peroxisome. It carries out the reaction a 2,3-saturated acyl-CoA + O2 = a (2E)-enoyl-CoA + H2O2. Its pathway is lipid metabolism; peroxisomal fatty acid beta-oxidation. This is Acyl-coenzyme A oxidase (POX1) from Komagataella pastoris (Yeast).